A 491-amino-acid chain; its full sequence is Probable cytosol aminopeptidase (491 aa).

Lys264 and Asp269 together coordinate Mn(2+). Lys276 is an active-site residue. 3 residues coordinate Mn(2+): Asp287, Asp346, and Glu348. Arg350 is a catalytic residue.

The protein belongs to the peptidase M17 family. Mn(2+) is required as a cofactor.

Its subcellular location is the cytoplasm. It catalyses the reaction Release of an N-terminal amino acid, Xaa-|-Yaa-, in which Xaa is preferably Leu, but may be other amino acids including Pro although not Arg or Lys, and Yaa may be Pro. Amino acid amides and methyl esters are also readily hydrolyzed, but rates on arylamides are exceedingly low.. The catalysed reaction is Release of an N-terminal amino acid, preferentially leucine, but not glutamic or aspartic acids.. Functionally, presumably involved in the processing and regular turnover of intracellular proteins. Catalyzes the removal of unsubstituted N-terminal amino acids from various peptides. This Xylella fastidiosa (strain Temecula1 / ATCC 700964) protein is Probable cytosol aminopeptidase.